Here is a 333-residue protein sequence, read N- to C-terminus: Holliday junction branch migration complex subunit RuvB (333 aa).

The interval methionine 1–tyrosine 182 is large ATPase domain (RuvB-L). Residues leucine 21, arginine 22, glycine 63, lysine 66, threonine 67, threonine 68, glutamate 129–phenylalanine 131, arginine 172, tyrosine 182, and arginine 219 contribute to the ATP site. Mg(2+) is bound at residue threonine 67. The interval lysine 183–histidine 253 is small ATPAse domain (RuvB-S). Residues proline 256–glycine 333 are head domain (RuvB-H). Residues arginine 311 and arginine 316 each coordinate DNA.

This sequence belongs to the RuvB family. As to quaternary structure, homohexamer. Forms an RuvA(8)-RuvB(12)-Holliday junction (HJ) complex. HJ DNA is sandwiched between 2 RuvA tetramers; dsDNA enters through RuvA and exits via RuvB. An RuvB hexamer assembles on each DNA strand where it exits the tetramer. Each RuvB hexamer is contacted by two RuvA subunits (via domain III) on 2 adjacent RuvB subunits; this complex drives branch migration. In the full resolvosome a probable DNA-RuvA(4)-RuvB(12)-RuvC(2) complex forms which resolves the HJ.

The protein resides in the cytoplasm. It carries out the reaction ATP + H2O = ADP + phosphate + H(+). Its function is as follows. The RuvA-RuvB-RuvC complex processes Holliday junction (HJ) DNA during genetic recombination and DNA repair, while the RuvA-RuvB complex plays an important role in the rescue of blocked DNA replication forks via replication fork reversal (RFR). RuvA specifically binds to HJ cruciform DNA, conferring on it an open structure. The RuvB hexamer acts as an ATP-dependent pump, pulling dsDNA into and through the RuvAB complex. RuvB forms 2 homohexamers on either side of HJ DNA bound by 1 or 2 RuvA tetramers; 4 subunits per hexamer contact DNA at a time. Coordinated motions by a converter formed by DNA-disengaged RuvB subunits stimulates ATP hydrolysis and nucleotide exchange. Immobilization of the converter enables RuvB to convert the ATP-contained energy into a lever motion, pulling 2 nucleotides of DNA out of the RuvA tetramer per ATP hydrolyzed, thus driving DNA branch migration. The RuvB motors rotate together with the DNA substrate, which together with the progressing nucleotide cycle form the mechanistic basis for DNA recombination by continuous HJ branch migration. Branch migration allows RuvC to scan DNA until it finds its consensus sequence, where it cleaves and resolves cruciform DNA. This Shouchella clausii (strain KSM-K16) (Alkalihalobacillus clausii) protein is Holliday junction branch migration complex subunit RuvB.